Reading from the N-terminus, the 245-residue chain is NAD(P)H-hydrate epimerase (245 aa).

In terms of domain architecture, YjeF N-terminal spans 21–221; the sequence is MREIDRLAVQ…DLGIPPAVYT (201 aa). A (6S)-NADPHX-binding site is contributed by 72–76; sequence GNGGG. Residues N73 and D135 each contribute to the K(+) site. Residues 139–145 and D168 each bind (6S)-NADPHX; that span reads GYSLLGA. Position 171 (S171) interacts with K(+).

It belongs to the NnrE/AIBP family. The cofactor is K(+).

The catalysed reaction is (6R)-NADHX = (6S)-NADHX. It carries out the reaction (6R)-NADPHX = (6S)-NADPHX. Catalyzes the epimerization of the S- and R-forms of NAD(P)HX, a damaged form of NAD(P)H that is a result of enzymatic or heat-dependent hydration. This is a prerequisite for the S-specific NAD(P)H-hydrate dehydratase to allow the repair of both epimers of NAD(P)HX. In Dehalogenimonas lykanthroporepellens (strain ATCC BAA-1523 / JCM 15061 / BL-DC-9), this protein is NAD(P)H-hydrate epimerase.